A 77-amino-acid chain; its full sequence is Exodeoxyribonuclease 7 small subunit (77 aa).

Belongs to the XseB family. Heterooligomer composed of large and small subunits.

Its subcellular location is the cytoplasm. It catalyses the reaction Exonucleolytic cleavage in either 5'- to 3'- or 3'- to 5'-direction to yield nucleoside 5'-phosphates.. Bidirectionally degrades single-stranded DNA into large acid-insoluble oligonucleotides, which are then degraded further into small acid-soluble oligonucleotides. This chain is Exodeoxyribonuclease 7 small subunit, found in Alkaliphilus oremlandii (strain OhILAs) (Clostridium oremlandii (strain OhILAs)).